Here is a 713-residue protein sequence, read N- to C-terminus: TWiK family of potassium channels protein 12 (713 aa).

At 1-15 (MTLFKKIQWFCNLIR) the chain is on the cytoplasmic side. Residues 16 to 36 (LRSYYKFLLLIAYTAFGAWLF) form a helical membrane-spanning segment. Asn-53, Asn-77, and Asn-98 each carry an N-linked (GlcNAc...) asparagine glycan. Positions 112-132 (WTWTGAMFYAGQLYTTIGYGY) form an intramembrane region, pore-forming. A helical transmembrane segment spans residues 142 to 162 (ICTIFYALFGIPCFLMYLKIE). The Cytoplasmic portion of the chain corresponds to 163 to 242 (NAIEWKKDKQ…AEERKKKPFP (80 aa)). Residues 243–263 (IPIAIIMLIIWICFSASMFCI) form a helical membrane-spanning segment. An intramembrane region (pore-forming) is located at residues 267 to 287 (TWVFSSAVYFFIVSISTVGLG). A helical membrane pass occupies residues 298-318 (VFNFLLILVGLALLSMCFELI). Residues 319–713 (TDRVAKWKQK…LSKRDASTMA (395 aa)) are Cytoplasmic-facing.

It belongs to the two pore domain potassium channel (TC 1.A.1.8) family.

Its subcellular location is the membrane. The polypeptide is TWiK family of potassium channels protein 12 (twk-12) (Caenorhabditis elegans).